Reading from the N-terminus, the 429-residue chain is Endoglucanase A (429 aa).

Residues 1–34 form the signal peptide; sequence MVSKKQKFLTVILVIVLAIVIVGGVFGISFVKGR. Over residues 46–94 the composition is skewed to basic and acidic residues; it reads AKTEQVKEPAKEEPKLVIKEKKQDESAKKEQELKKAKEEAEAAVEKETE. A disordered region spans residues 46–100; it reads AKTEQVKEPAKEEPKLVIKEKKQDESAKKEQELKKAKEEAEAAVEKETEKTEEEP. Residue glutamate 249 is the Proton donor of the active site. Glutamate 334 acts as the Nucleophile in catalysis.

The protein belongs to the glycosyl hydrolase 5 (cellulase A) family.

The enzyme catalyses Endohydrolysis of (1-&gt;4)-beta-D-glucosidic linkages in cellulose, lichenin and cereal beta-D-glucans.. The protein is Endoglucanase A (celA) of Butyrivibrio fibrisolvens.